The primary structure comprises 114 residues: U17-barytoxin-Tl1d (114 aa).

An N-terminal signal peptide occupies residues 1–20 (MKTIIVFLSLLVLATKFGDA). Positions 21–74 (NEGVNQEQMKEVIQNEFREDFLNEMAPMSLLQQLEAIESTLLEKEADRNSRQKR) are excised as a propeptide. 3 cysteine pairs are disulfide-bonded: Cys-75/Cys-88, Cys-82/Cys-93, and Cys-87/Cys-108.

This sequence belongs to the neurotoxin 14 (magi-1) family. 03 (ICK-30-40) subfamily. Expressed by the venom gland.

It localises to the secreted. Ion channel inhibitor. The polypeptide is U17-barytoxin-Tl1d (Trittame loki (Brush-footed trapdoor spider)).